The following is a 172-amino-acid chain: MTKQALDATIADMAGPFLASLGLELWGIELSYGGRTVVRLFVDGPEGVTIDQCAEVSRHVGLALEVEDVISSAYVLEVSSPGLERPFFRAEQMSPYVGRQIELTLIDPTPEWPGRRKFRGELLAVEGDTVVLRPEGAPAPEAEEAVLRTSWQGVRKANLIHVFPEPGHKPRR.

Belongs to the RimP family.

Its subcellular location is the cytoplasm. Its function is as follows. Required for maturation of 30S ribosomal subunits. This Nitratidesulfovibrio vulgaris (strain ATCC 29579 / DSM 644 / CCUG 34227 / NCIMB 8303 / VKM B-1760 / Hildenborough) (Desulfovibrio vulgaris) protein is Ribosome maturation factor RimP.